The primary structure comprises 397 residues: L-asparaginase-like protein GD25160 (397 aa).

The signal sequence occupies residues 1–22 (MLAQSCCLRLLILLLLFTSICS). Intrachain disulfides connect Cys-90/Cys-95, Cys-189/Cys-205, and Cys-344/Cys-371.

This sequence belongs to the Ntn-hydrolase family.

In Drosophila simulans (Fruit fly), this protein is L-asparaginase-like protein GD25160.